A 202-amino-acid chain; its full sequence is Urease accessory protein UreG (202 aa).

Position 10-17 (Gly10–Thr17) interacts with GTP.

Belongs to the SIMIBI class G3E GTPase family. UreG subfamily. In terms of assembly, homodimer. UreD, UreF and UreG form a complex that acts as a GTP-hydrolysis-dependent molecular chaperone, activating the urease apoprotein by helping to assemble the nickel containing metallocenter of UreC. The UreE protein probably delivers the nickel.

Its subcellular location is the cytoplasm. Functionally, facilitates the functional incorporation of the urease nickel metallocenter. This process requires GTP hydrolysis, probably effectuated by UreG. The polypeptide is Urease accessory protein UreG (Synechococcus sp. (strain JA-3-3Ab) (Cyanobacteria bacterium Yellowstone A-Prime)).